The sequence spans 702 residues: Methionine--tRNA ligase (702 aa).

The 'HIGH' region motif lies at 23–33 (PYANGPLHLGH). Positions 154, 157, 167, and 170 each coordinate Zn(2+). A 'KMSKS' region motif is present at residues 341-345 (KMSKS). K344 serves as a coordination point for ATP. A disordered region spans residues 562–593 (LAPPPASAKQQNASMSNTAPPPTAEKPETTAP). A compositionally biased stretch (polar residues) spans 569–578 (AKQQNASMSN). The region spanning 599–702 (DFAKLDLRIG…SSAQPGMPVR (104 aa)) is the tRNA-binding domain.

It belongs to the class-I aminoacyl-tRNA synthetase family. MetG type 1 subfamily. In terms of assembly, homodimer. It depends on Zn(2+) as a cofactor.

The protein resides in the cytoplasm. It catalyses the reaction tRNA(Met) + L-methionine + ATP = L-methionyl-tRNA(Met) + AMP + diphosphate. Functionally, is required not only for elongation of protein synthesis but also for the initiation of all mRNA translation through initiator tRNA(fMet) aminoacylation. The protein is Methionine--tRNA ligase of Xylella fastidiosa (strain 9a5c).